Here is a 151-residue protein sequence, read N- to C-terminus: 3-dehydroquinate dehydratase (151 aa).

Tyrosine 24 serves as the catalytic Proton acceptor. Asparagine 76, histidine 82, and aspartate 89 together coordinate substrate. Histidine 102 (proton donor) is an active-site residue. Substrate contacts are provided by residues 103 to 104 (VS) and arginine 113.

The protein belongs to the type-II 3-dehydroquinase family. As to quaternary structure, homododecamer.

It catalyses the reaction 3-dehydroquinate = 3-dehydroshikimate + H2O. It functions in the pathway metabolic intermediate biosynthesis; chorismate biosynthesis; chorismate from D-erythrose 4-phosphate and phosphoenolpyruvate: step 3/7. In terms of biological role, catalyzes a trans-dehydration via an enolate intermediate. The chain is 3-dehydroquinate dehydratase from Rhodopseudomonas palustris (strain HaA2).